Consider the following 191-residue polypeptide: Early nodulin-like protein 8 (191 aa).

Positions Met-1–Gly-22 are cleaved as a signal peptide. A Phytocyanin domain is found at Thr-31–Thr-133. The cysteines at positions 87 and 121 are disulfide-linked. N-linked (GlcNAc...) asparagine glycosylation is found at Asn-104 and Asn-108. The GPI-anchor amidated serine moiety is linked to residue Ser-165. The propeptide at Ser-166–Met-191 is removed in mature form.

The protein belongs to the early nodulin-like (ENODL) family. Mostly expressed in seedlings and roots, and, to a lower extent, in leaves, flowers, stems and seeds.

It localises to the cell membrane. In terms of biological role, may act as a carbohydrate transporter. The polypeptide is Early nodulin-like protein 8 (Arabidopsis thaliana (Mouse-ear cress)).